The following is a 175-amino-acid chain: Pancreatic beta cell growth factor (175 aa).

The first 26 residues, 1-26 (MMLPMTLCRMSWMLLSCLMFLSWVEG), serve as a signal peptide directing secretion. The C-type lectin domain maps to 38–175 (ITCPQGSVAY…ELPYICKFKV (138 aa)). Disulfide bonds link Cys-40-Cys-51, Cys-68-Cys-171, and Cys-146-Cys-163.

Expressed only in CW animals pancreas and to a lesser extent in duodenum. In pancreas it is found in acinar cells, but not in islets.

The protein localises to the secreted. In terms of biological role, constituent of ilotropin, which is a partially purified preparation of cellophane wrapping (CW) pancreata. Capable of initiating duct cell proliferation, a prerequisite for islet neogenesis. The polypeptide is Pancreatic beta cell growth factor (INGAP) (Mesocricetus auratus (Golden hamster)).